The following is a 268-amino-acid chain: Ribosomal RNA small subunit methyltransferase A (268 aa).

S-adenosyl-L-methionine contacts are provided by Asn18, Leu20, Gly45, Glu66, Asp91, and Asn112.

The protein belongs to the class I-like SAM-binding methyltransferase superfamily. rRNA adenine N(6)-methyltransferase family. RsmA subfamily.

It is found in the cytoplasm. The enzyme catalyses adenosine(1518)/adenosine(1519) in 16S rRNA + 4 S-adenosyl-L-methionine = N(6)-dimethyladenosine(1518)/N(6)-dimethyladenosine(1519) in 16S rRNA + 4 S-adenosyl-L-homocysteine + 4 H(+). In terms of biological role, specifically dimethylates two adjacent adenosines (A1518 and A1519) in the loop of a conserved hairpin near the 3'-end of 16S rRNA in the 30S particle. May play a critical role in biogenesis of 30S subunits. The protein is Ribosomal RNA small subunit methyltransferase A of Vibrio vulnificus (strain CMCP6).